The primary structure comprises 226 residues: Cytidylate kinase (226 aa).

Residue 10 to 18 (GPASSGKST) participates in ATP binding.

It belongs to the cytidylate kinase family. Type 1 subfamily.

Its subcellular location is the cytoplasm. It carries out the reaction CMP + ATP = CDP + ADP. It catalyses the reaction dCMP + ATP = dCDP + ADP. The protein is Cytidylate kinase of Streptococcus equi subsp. equi (strain 4047).